The sequence spans 180 residues: NADH-quinone oxidoreductase subunit I (180 aa).

2 consecutive 4Fe-4S ferredoxin-type domains span residues 50 to 80 (LTRD…LQKA) and 90 to 119 (EFFR…LTPD). [4Fe-4S] cluster-binding residues include cysteine 60, cysteine 63, cysteine 66, cysteine 70, cysteine 99, cysteine 102, cysteine 105, and cysteine 109.

The protein belongs to the complex I 23 kDa subunit family. NDH-1 is composed of 13 different subunits. Subunits NuoA, H, J, K, L, M, N constitute the membrane sector of the complex. [4Fe-4S] cluster serves as cofactor.

The protein localises to the cell inner membrane. The enzyme catalyses a quinone + NADH + 5 H(+)(in) = a quinol + NAD(+) + 4 H(+)(out). Its function is as follows. NDH-1 shuttles electrons from NADH, via FMN and iron-sulfur (Fe-S) centers, to quinones in the respiratory chain. The immediate electron acceptor for the enzyme in this species is believed to be ubiquinone. Couples the redox reaction to proton translocation (for every two electrons transferred, four hydrogen ions are translocated across the cytoplasmic membrane), and thus conserves the redox energy in a proton gradient. The polypeptide is NADH-quinone oxidoreductase subunit I (Salmonella choleraesuis (strain SC-B67)).